Reading from the N-terminus, the 220-residue chain is Large ribosomal subunit protein bL9 (220 aa).

Residues Ala-167–Asp-184 are compositionally biased toward low complexity. The interval Ala-167–Thr-220 is disordered.

The protein belongs to the bacterial ribosomal protein bL9 family.

Functionally, binds to the 23S rRNA. This Anaplasma marginale (strain St. Maries) protein is Large ribosomal subunit protein bL9.